The sequence spans 435 residues: UDP-N-acetylmuramate--L-alanine ligase (435 aa).

ATP is bound at residue 108–114 (GSHGKTS).

Belongs to the MurCDEF family.

It is found in the cytoplasm. The catalysed reaction is UDP-N-acetyl-alpha-D-muramate + L-alanine + ATP = UDP-N-acetyl-alpha-D-muramoyl-L-alanine + ADP + phosphate + H(+). Its pathway is cell wall biogenesis; peptidoglycan biosynthesis. In terms of biological role, cell wall formation. This Shouchella clausii (strain KSM-K16) (Alkalihalobacillus clausii) protein is UDP-N-acetylmuramate--L-alanine ligase.